A 151-amino-acid chain; its full sequence is Chaperonin GroEL (151 aa).

Residue 41–45 (DGTTT) coordinates ATP.

This sequence belongs to the chaperonin (HSP60) family. In terms of assembly, forms a cylinder of 14 subunits composed of two heptameric rings stacked back-to-back. Interacts with the co-chaperonin GroES.

It localises to the cytoplasm. It catalyses the reaction ATP + H2O + a folded polypeptide = ADP + phosphate + an unfolded polypeptide.. Together with its co-chaperonin GroES, plays an essential role in assisting protein folding. The GroEL-GroES system forms a nano-cage that allows encapsulation of the non-native substrate proteins and provides a physical environment optimized to promote and accelerate protein folding. This chain is Chaperonin GroEL, found in Mycobacterium marinum.